The sequence spans 274 residues: MGFSGHHARKRFGQHWLLDESVLQRIIEAADLQSTDRVLEVGPGRGALTERLLAAGLKAVHAIELDRDLVQGLRDRFVVQPGFSLHQGDVLEAPLELSDGRIADKVVANIPYNITGPLLERLVGRLDRPVDPPYQRLVLLVQKEVAERIRARPGHSSFSALSVRMQLLARCHSVCPVPPRCFQPPPKVQSEVICLEPLPASERVMPDLAARVESLLKQAFLARRKMLRNTLAGVAEPNRLKDLAASAGFSLQQRPQELAPATWVALARGLNRGD.

The S-adenosyl-L-methionine site is built by H15, L17, G42, E64, D89, and N109.

It belongs to the class I-like SAM-binding methyltransferase superfamily. rRNA adenine N(6)-methyltransferase family. RsmA subfamily.

The protein localises to the cytoplasm. The catalysed reaction is adenosine(1518)/adenosine(1519) in 16S rRNA + 4 S-adenosyl-L-methionine = N(6)-dimethyladenosine(1518)/N(6)-dimethyladenosine(1519) in 16S rRNA + 4 S-adenosyl-L-homocysteine + 4 H(+). Specifically dimethylates two adjacent adenosines (A1518 and A1519) in the loop of a conserved hairpin near the 3'-end of 16S rRNA in the 30S particle. May play a critical role in biogenesis of 30S subunits. This chain is Ribosomal RNA small subunit methyltransferase A, found in Synechococcus sp. (strain CC9605).